The chain runs to 192 residues: HTH-type transcriptional repressor SCO4008 (192 aa).

The HTH tetR-type domain occupies 7 to 67 (EATKARIFEA…SVLEKKMLDL (61 aa)). The segment at residues 30–49 (RIDRIAAEARANKQLIYAYY) is a DNA-binding region (H-T-H motif).

Homodimer. Four dimers bind to the two operator sites.

Binding of a wide range of cationic hydrophobic compounds to SCO4008 causes a decrease in DNA-binding, probably via allosteric conformational change of SCO4008. Its function is as follows. Probably regulates the expression of its own gene and the adjacent SCO4007 gene by binding to two operator sites in the SCO4007-SCO4008 intergenic region. This chain is HTH-type transcriptional repressor SCO4008, found in Streptomyces coelicolor (strain ATCC BAA-471 / A3(2) / M145).